The chain runs to 635 residues: Beta-mannosyltransferase 2 (635 aa).

Topologically, residues 1 to 6 (MRTRLN) are cytoplasmic. A helical transmembrane segment spans residues 7-27 (FLLLCIASVLSVIWIGVLLTW). Residues 28 to 635 (NDNNLGGISL…EKKEAEKKGK (608 aa)) lie on the Extracellular side of the membrane. An N-linked (GlcNAc...) asparagine glycan is attached at Asn-484. Positions 512–635 (TRGEAERRRR…EKKEAEKKGK (124 aa)) form a coiled coil. The tract at residues 517–635 (ERRRRVAEER…EKKEAEKKGK (119 aa)) is disordered.

Belongs to the BMT family.

The protein resides in the membrane. In terms of biological role, beta-mannosyltransferase involved in cell wall biosynthesis. Initiates the beta-mannosylation of core N-linked glycans. In Komagataella phaffii (strain ATCC 76273 / CBS 7435 / CECT 11047 / NRRL Y-11430 / Wegner 21-1) (Yeast), this protein is Beta-mannosyltransferase 2 (BMT2).